The following is a 176-amino-acid chain: I-Kappa-B like protein G1 (176 aa).

ANK repeat units follow at residues 56-88 (EGRQ…DINS), 93-123 (FGNT…ELGA), and 127-156 (LYKT…VCDD).

Belongs to the polydnaviridae I-Kappa-B-like protein family.

Its function is as follows. Suppresses the host immune response through NF-kappa-B inactivation. Possesses ankyrin repeat domains required for NF-kappa-B binding but lacks the regulatory regions required for dissociation from NF-kappa-B and degradation. Therefore, prevents host NF-kappa-B release and subsequent activation. The sequence is that of I-Kappa-B like protein G1 (G3) from Microplitis demolitor (Parasitoid wasp).